A 130-amino-acid polypeptide reads, in one-letter code: Small ribosomal subunit protein uS8 (130 aa).

The protein belongs to the universal ribosomal protein uS8 family. In terms of assembly, part of the 30S ribosomal subunit. Contacts proteins S5 and S12.

One of the primary rRNA binding proteins, it binds directly to 16S rRNA central domain where it helps coordinate assembly of the platform of the 30S subunit. The protein is Small ribosomal subunit protein uS8 of Opitutus terrae (strain DSM 11246 / JCM 15787 / PB90-1).